The sequence spans 232 residues: tRNA (guanine-N(7)-)-methyltransferase (232 aa).

S-adenosyl-L-methionine is bound by residues E63, E88, D115, and D137. D137 is an active-site residue. Substrate-binding positions include K141, D173, and 211-214 (TRYE).

The protein belongs to the class I-like SAM-binding methyltransferase superfamily. TrmB family.

The catalysed reaction is guanosine(46) in tRNA + S-adenosyl-L-methionine = N(7)-methylguanosine(46) in tRNA + S-adenosyl-L-homocysteine. Its pathway is tRNA modification; N(7)-methylguanine-tRNA biosynthesis. Its function is as follows. Catalyzes the formation of N(7)-methylguanine at position 46 (m7G46) in tRNA. This is tRNA (guanine-N(7)-)-methyltransferase from Agrobacterium fabrum (strain C58 / ATCC 33970) (Agrobacterium tumefaciens (strain C58)).